The primary structure comprises 252 residues: Insulin-induced gene 1 protein (252 aa).

Over 1–59 the chain is Cytoplasmic; sequence MPRLESGAWSCSCAARARHAARPGEAAPKADAMQSPSPSAGRAEREASGGSATTWRQHL. The tract at residues 22-48 is disordered; that stretch reads RPGEAAPKADAMQSPSPSAGRAEREAS. Residues 60-82 traverse the membrane as a helical segment; the sequence is VQRSVVLFVVGAFMALVLNLLQI. Topologically, residues 83 to 101 are extracellular; the sequence is QRNVTLFPDEVIATLFSSA. A helical transmembrane segment spans residues 102 to 119; the sequence is WWVPPCCGTAAAVVGLLY. The Cytoplasmic portion of the chain corresponds to 120–134; the sequence is PCIDSHLGEPHKFKR. A helical membrane pass occupies residues 135 to 157; it reads EWASVMRCIAVFVGINHASAKLD. At 158-160 the chain is on the extracellular side; that stretch reads FAN. The helical transmembrane segment at 161–179 threads the bilayer; sequence NVQLSLTLAALSLGLWWTF. Over 180–184 the chain is Cytoplasmic; sequence DRSRS. A helical transmembrane segment spans residues 185–206; sequence GLGLGITIAFVATLITQFLVYN. At 207–220 the chain is on the extracellular side; sequence GVYQYTSPDFLYIR. A helical membrane pass occupies residues 221–238; that stretch reads SWLPCIFFSGGVTVGNIG. Topologically, residues 239–252 are cytoplasmic; that stretch reads RQLAMGIPEKPHND. The KxHxx signature appears at 246-252; it reads PEKPHND.

Belongs to the INSIG family. In terms of assembly, interacts with SCAP; interaction is direct and only takes place in the presence of sterols; it prevents interaction between SCAP and the coat protein complex II (COPII). Associates with the SCAP-SREBP complex; association is mediated via its interaction with SCAP and only takes place in the presence of sterols.

The protein resides in the endoplasmic reticulum membrane. Oxysterol-binding protein that mediates feedback control of cholesterol synthesis by controlling both endoplasmic reticulum to Golgi transport of SCAP and degradation of HMGCR. Acts as a negative regulator of cholesterol biosynthesis by mediating the retention of the SCAP-SREBP complex in the endoplasmic reticulum, thereby blocking the processing of sterol regulatory element-binding proteins (SREBPs). Binds oxysterol, including 25-hydroxycholesterol, regulating interaction with SCAP and retention of the SCAP-SREBP complex in the endoplasmic reticulum. In presence of oxysterol, interacts with SCAP, retaining the SCAP-SREBP complex in the endoplasmic reticulum, thereby preventing SCAP from escorting SREBPs to the Golgi. Sterol deprivation reduces oxysterol-binding, disrupting the interaction between INSIG1 and SCAP, thereby promoting Golgi transport of the SCAP-SREBP complex, followed by processing and nuclear translocation of SREBPs. Also regulates cholesterol synthesis by regulating degradation of HMGCR. The polypeptide is Insulin-induced gene 1 protein (Gallus gallus (Chicken)).